Consider the following 97-residue polypeptide: C-C motif chemokine 8 (97 aa).

A signal peptide spans 1 to 23 (MKIYAVLLCLLLIAVPVSPEKLT). Cystine bridges form between C32–C57 and C33–C73.

Belongs to the intercrine beta (chemokine CC) family. Monomer or homodimer; in equilibrium.

It is found in the secreted. Its function is as follows. Chemotactic factor that attracts monocytes. This protein can bind heparin. This Mus musculus (Mouse) protein is C-C motif chemokine 8 (Ccl8).